Here is a 274-residue protein sequence, read N- to C-terminus: MAVIKCKPTSPGRRHVVKVVNTDLHKGKPFAALLAKKSKSGGRNNTGRITVRHVGGGHKQHYRLIDFKRNKDGIPAKVERIEYDPNRTAHIALVLYADGERRYILAAKGMKSGDPIQSGVGSEIKTGNSMPLRNIPVGSVVHAVEMKPGKGAQIARSAGAYVQVIARDGAYATLRLRSGEMRKVPVDCRATFGEVGNAEHMLRQLGKAGAKRWRGVRPTVRGVAMNPVDHPHGGGEGRTSGGRHPVSPWGVPTKGYKTRSNKRTDKYIVRRRNK.

The disordered stretch occupies residues 223 to 264 (VAMNPVDHPHGGGEGRTSGGRHPVSPWGVPTKGYKTRSNKRT).

It belongs to the universal ribosomal protein uL2 family. In terms of assembly, part of the 50S ribosomal subunit. Forms a bridge to the 30S subunit in the 70S ribosome.

Functionally, one of the primary rRNA binding proteins. Required for association of the 30S and 50S subunits to form the 70S ribosome, for tRNA binding and peptide bond formation. It has been suggested to have peptidyltransferase activity; this is somewhat controversial. Makes several contacts with the 16S rRNA in the 70S ribosome. This chain is Large ribosomal subunit protein uL2, found in Shewanella denitrificans (strain OS217 / ATCC BAA-1090 / DSM 15013).